The primary structure comprises 96 residues: Complement inhibitor RaCI4 (96 aa).

The N-terminal stretch at Met1–Ser24 is a signal peptide. 3 disulfides stabilise this stretch: Cys37–Cys61, Cys42–Cys63, and Cys57–Cys78.

Belongs to the RaCI family. As to expression, expressed in salivary glands.

The protein resides in the secreted. Complement inhibitor. Prevents complement-mediated C5 activation by binding to C5. Binds C5 at a different binding site than the other tick complement inhibitors OmCI and CirpT1, and the drug eculizumab. Inhibits complement in human and guinea pig but not in other species tested (rabbit, rat, mouse, and pig). The protein is Complement inhibitor RaCI4 of Hyalomma rufipes (Tick).